The following is a 378-amino-acid chain: Vacuolar membrane protein CAGL0J10076g (378 aa).

The interval 18–70 (RGLPRLVTTSTTPTPTTEPTTEPTTTKDETSQTSATDASTATTSTAATSTAAT) is disordered. Composition is skewed to low complexity over residues 25–41 (TTST…TEPT) and 48–70 (SQTS…TAAT). Residues 118-138 (FIAVGSIAGAILMLIFLWWSI) form a helical membrane-spanning segment. Positions 299–368 (NDYDTPLIPD…ARDHRKTPSM (70 aa)) are disordered. The span at 321–337 (RSHRKTPSNDKYHRRNR) shows a compositional bias: basic residues. The span at 343–356 (SPSRSPTRTPIRTR) shows a compositional bias: low complexity.

The protein belongs to the PRM5 family.

It is found in the vacuole membrane. The sequence is that of Vacuolar membrane protein CAGL0J10076g from Candida glabrata (strain ATCC 2001 / BCRC 20586 / JCM 3761 / NBRC 0622 / NRRL Y-65 / CBS 138) (Yeast).